Here is a 201-residue protein sequence, read N- to C-terminus: Small ribosomal subunit protein uS4 (201 aa).

The S4 RNA-binding domain occupies 91–151 (SRLDNVVYRA…DKSINTLPFE (61 aa)).

It belongs to the universal ribosomal protein uS4 family. As to quaternary structure, part of the 30S ribosomal subunit. Contacts protein S5. The interaction surface between S4 and S5 is involved in control of translational fidelity.

Its function is as follows. One of the primary rRNA binding proteins, it binds directly to 16S rRNA where it nucleates assembly of the body of the 30S subunit. With S5 and S12 plays an important role in translational accuracy. This Mycolicibacterium gilvum (strain PYR-GCK) (Mycobacterium gilvum (strain PYR-GCK)) protein is Small ribosomal subunit protein uS4.